Consider the following 262-residue polypeptide: MSRIHPTAIIESGAQLDESVEIGPYAIVGANVTIGARTTIGSHSVIEGHTTIGEDNRIGHYASVGGRPQDMKYRDEPTKLVIGSRNTIREFTTIHTGTVQDKGITTLGDDNWIMAYVHIGHDCQIGSNVILSSNAQMAGHVIVGDHAIVGGMSGVHQFVRIGAHSMLGGASALVQDIPPFVIAAGNKAEPHGINVEGLRRRGFSADAISALRSAYRLLYKNGLSLEDAKVQLRELAAAGGDGDEPVRALVDFVEQSQRGIIR.

It belongs to the transferase hexapeptide repeat family. LpxA subfamily. Homotrimer.

The protein localises to the cytoplasm. The enzyme catalyses a (3R)-hydroxyacyl-[ACP] + UDP-N-acetyl-alpha-D-glucosamine = a UDP-3-O-[(3R)-3-hydroxyacyl]-N-acetyl-alpha-D-glucosamine + holo-[ACP]. It functions in the pathway glycolipid biosynthesis; lipid IV(A) biosynthesis; lipid IV(A) from (3R)-3-hydroxytetradecanoyl-[acyl-carrier-protein] and UDP-N-acetyl-alpha-D-glucosamine: step 1/6. Its function is as follows. Involved in the biosynthesis of lipid A, a phosphorylated glycolipid that anchors the lipopolysaccharide to the outer membrane of the cell. This chain is Acyl-[acyl-carrier-protein]--UDP-N-acetylglucosamine O-acyltransferase, found in Paraburkholderia phymatum (strain DSM 17167 / CIP 108236 / LMG 21445 / STM815) (Burkholderia phymatum).